The sequence spans 204 residues: MASSVTLLLWSLLLLGTLSAIQAKKSKENLKEITHKVYFDVEIDGKAAGRIVMGLFGKTVPKTVENFRALCTGEKGIGKNGKALHYKGSSFHRIIPSFMLQGGDFTHGNGMGGESIYGEKFADENFKLKHTGPGFLSMANAGQDTNGSQFFITTVTTSWLDGRHVVFGKVVTGMDVVYKVEAEGNQSGTPKSKVVIVDSGELPL.

Positions 1–23 (MASSVTLLLWSLLLLGTLSAIQA) are cleaved as a signal peptide. The PPIase cyclophilin-type domain occupies 38 to 201 (YFDVEIDGKA…SKVVIVDSGE (164 aa)).

The protein belongs to the cyclophilin-type PPIase family. Interacts with the PP2A A subunit PP2AA1/RCN1. Ubiquitous, mostly in aerial organs. Higher levels in leaf and buds, and lower levels in seedlings.

It localises to the endoplasmic reticulum. The protein localises to the secreted. It carries out the reaction [protein]-peptidylproline (omega=180) = [protein]-peptidylproline (omega=0). With respect to regulation, binds cyclosporin A (CsA). CsA mediates some of its effects via an inhibitory action on PPIase. PPIases accelerate the folding of proteins. It catalyzes the cis-trans isomerization of proline imidic peptide bonds in oligopeptides. Seems to be involved in root development. This is Peptidyl-prolyl cis-trans isomerase CYP20-1 (CYP20-1) from Arabidopsis thaliana (Mouse-ear cress).